We begin with the raw amino-acid sequence, 416 residues long: Queuine tRNA-ribosyltransferase accessory subunit 2 (416 aa).

Positions 323, 325, 328, and 354 each coordinate Zn(2+).

Belongs to the queuine tRNA-ribosyltransferase family. QTRT2 subfamily. In terms of assembly, heterodimer of a catalytic subunit and an accessory subunit. It depends on Zn(2+) as a cofactor.

It is found in the cytoplasm. Its function is as follows. Non-catalytic subunit of the queuine tRNA-ribosyltransferase (TGT) that catalyzes the base-exchange of a guanine (G) residue with queuine (Q) at position 34 (anticodon wobble position) in tRNAs with GU(N) anticodons (tRNA-Asp, -Asn, -His and -Tyr), resulting in the hypermodified nucleoside queuosine (7-(((4,5-cis-dihydroxy-2-cyclopenten-1-yl)amino)methyl)-7-deazaguanosine). In Drosophila mojavensis (Fruit fly), this protein is Queuine tRNA-ribosyltransferase accessory subunit 2.